The sequence spans 386 residues: S-adenosylmethionine synthase (386 aa).

Position 16 (His-16) interacts with ATP. Position 18 (Asp-18) interacts with Mg(2+). Glu-44 is a binding site for K(+). Residues Glu-57 and Gln-100 each contribute to the L-methionine site. Positions 100 to 110 (QSGDIAMGVDE) are flexible loop. Residues 165–167 (DAK), Asp-240, 246–247 (RK), Ala-263, and Lys-267 contribute to the ATP site. Asp-240 contributes to the L-methionine binding site. Lys-271 is an L-methionine binding site.

Belongs to the AdoMet synthase family. As to quaternary structure, homotetramer; dimer of dimers. Mg(2+) is required as a cofactor. The cofactor is K(+).

The protein resides in the cytoplasm. It catalyses the reaction L-methionine + ATP + H2O = S-adenosyl-L-methionine + phosphate + diphosphate. The protein operates within amino-acid biosynthesis; S-adenosyl-L-methionine biosynthesis; S-adenosyl-L-methionine from L-methionine: step 1/1. In terms of biological role, catalyzes the formation of S-adenosylmethionine (AdoMet) from methionine and ATP. The overall synthetic reaction is composed of two sequential steps, AdoMet formation and the subsequent tripolyphosphate hydrolysis which occurs prior to release of AdoMet from the enzyme. The polypeptide is S-adenosylmethionine synthase (Hahella chejuensis (strain KCTC 2396)).